Consider the following 747-residue polypeptide: Eukaryotic translation initiation factor 3 subunit B (747 aa).

An RRM domain is found at 42-128 (AFVVVDGLPE…HTLRVNKLTD (87 aa)). 5 WD repeats span residues 195-234 (DRQHWTETFVQWSPLGTYLTSVHAQGVQLWGGPSWTRQRR), 236-292 (AHPF…PLRS), 310-349 (APKFPWPAFKWSADDKYVARLNPGQSISVYELPRMNLLDK), 520-563 (LEKK…EKPE), and 578-623 (ADHY…LREE).

Belongs to the eIF-3 subunit B family. In terms of assembly, component of the eukaryotic translation initiation factor 3 (eIF-3) complex.

The protein localises to the cytoplasm. In terms of biological role, RNA-binding component of the eukaryotic translation initiation factor 3 (eIF-3) complex, which is involved in protein synthesis of a specialized repertoire of mRNAs and, together with other initiation factors, stimulates binding of mRNA and methionyl-tRNAi to the 40S ribosome. The eIF-3 complex specifically targets and initiates translation of a subset of mRNAs involved in cell proliferation. The polypeptide is Eukaryotic translation initiation factor 3 subunit B (prt-1) (Neurospora crassa (strain ATCC 24698 / 74-OR23-1A / CBS 708.71 / DSM 1257 / FGSC 987)).